We begin with the raw amino-acid sequence, 580 residues long: MDDPDCDSTWEEESEEDGEDGQADDTTDEDTGDDDGDAEEARPSLFQSRMTGYRNWRAMQDMQRYRHNYPDLTDQDCNGDMCNLSFYKNEICFQPNGALIEDILQNWKDNYDLLEENHSYIQWLFPLREPGVNWHAKPLTLKEVEAFKSSKEVRERLVRAYELMLGFYGFHLEDRGTGAVCRAQNFQPRFHNLNSHSHNNLRITRILKSLGELGLEHYQAPLVRFFLEETLVQHKLPSVRQSALDYFLFAVRCRHQRRELVYFAWEHFKPRREFVWGPRDKLRRFKPQTIPQPLTGPGQADKDEGSRDPSQEAGTQGRTCGSGRDLSGDSGTAEDPSLLNTKPSDGGTLDGNQRDEAKSLSPKESKKRKLEGNRQEQVPGEADPQGVSEVEKIALNLEECALSPISQEPREAEPPCPVARVANEVRKRRKVEEGAEGDGVVSNTQMQASALPPTPSECPEAQKDGNGPEDSNSQVGAEDSKSQVGPEDPNSQVGLEDPNSQVGPEDPNSQVGPEDPNSQVGPEDPNSQVGPEDPNSQVVGPEQAASKSPVEDPDSDTMGTSVDESEELARIEASAEPPKP.

Met1 bears the N-acetylmethionine mark. Residues 1–38 are compositionally biased toward acidic residues; sequence MDDPDCDSTWEEESEEDGEDGQADDTTDEDTGDDDGDA. Disordered regions lie at residues 1–44 and 285–390; these read MDDP…ARPS and FKPQ…VSEV. A Bipartite nuclear localization signal motif is present at residues 257–286; the sequence is RRELVYFAWEHFKPRREFVWGPRDKLRRFK. Basic and acidic residues predominate over residues 300–310; that stretch reads ADKDEGSRDPS. Ser327, Ser361, Ser365, and Ser403 each carry phosphoserine. A compositionally biased stretch (basic and acidic residues) spans 352-374; it reads NQRDEAKSLSPKESKKRKLEGNR. Positions 405-580 are disordered; that stretch reads ISQEPREAEP…IEASAEPPKP (176 aa). Tandem repeats lie at residues 467-475, 476-484, 485-493, 494-502, 503-511, 512-520, 521-529, and 530-538. Positions 467–538 are 8 X approximate tandem repeats; the sequence is GPEDSNSQVG…VGPEDPNSQV (72 aa). The segment covering 489 to 538 has biased composition (polar residues); it reads PNSQVGLEDPNSQVGPEDPNSQVGPEDPNSQVGPEDPNSQVGPEDPNSQV. Phosphoserine is present on residues Ser548 and Ser555.

It belongs to the opioid growth factor receptor family. In terms of tissue distribution, highly expressed in 6-day old cerebellum and brain. Lower expressed in adult cerebellum. The protein is detected in germinal cells of the cerebellum, in neurons of the deep cerebellar nuclei and in the glia in the medullary layer.

The protein resides in the cytoplasm. It is found in the perinuclear region. The protein localises to the nucleus. Its function is as follows. Receptor for opioid growth factor (OGF), also known as Met-enkephalin. Seems to be involved in growth regulation. This Rattus norvegicus (Rat) protein is Opioid growth factor receptor (Ogfr).